The chain runs to 283 residues: Formamidopyrimidine-DNA glycosylase (283 aa).

The active-site Schiff-base intermediate with DNA is the P2. E3 (proton donor) is an active-site residue. Residue K60 is the Proton donor; for beta-elimination activity of the active site. Residues H100, R119, and R164 each coordinate DNA. An FPG-type zinc finger spans residues 249 to 283 (WVYNRAGEPCKVCGDVIQRIKLGGRSSHFCRQCQV). R273 functions as the Proton donor; for delta-elimination activity in the catalytic mechanism.

The protein belongs to the FPG family. As to quaternary structure, monomer. Requires Zn(2+) as cofactor.

The enzyme catalyses Hydrolysis of DNA containing ring-opened 7-methylguanine residues, releasing 2,6-diamino-4-hydroxy-5-(N-methyl)formamidopyrimidine.. It catalyses the reaction 2'-deoxyribonucleotide-(2'-deoxyribose 5'-phosphate)-2'-deoxyribonucleotide-DNA = a 3'-end 2'-deoxyribonucleotide-(2,3-dehydro-2,3-deoxyribose 5'-phosphate)-DNA + a 5'-end 5'-phospho-2'-deoxyribonucleoside-DNA + H(+). Involved in base excision repair of DNA damaged by oxidation or by mutagenic agents. Acts as a DNA glycosylase that recognizes and removes damaged bases. Has a preference for oxidized purines, such as 7,8-dihydro-8-oxoguanine (8-oxoG). Has AP (apurinic/apyrimidinic) lyase activity and introduces nicks in the DNA strand. Cleaves the DNA backbone by beta-delta elimination to generate a single-strand break at the site of the removed base with both 3'- and 5'-phosphates. The chain is Formamidopyrimidine-DNA glycosylase from Nostoc sp. (strain PCC 7120 / SAG 25.82 / UTEX 2576).